A 282-amino-acid polypeptide reads, in one-letter code: Heme oxygenase 1, chloroplastic (282 aa).

The N-terminal 54 residues, 1-54, are a transit peptide targeting the chloroplast; sequence MAYLAPISSSLSIFKNPQLSRFQFSSSSPNPLFLRPRIQILSMTMNKSPSLVVV. Heme b is bound at residue histidine 86.

It belongs to the heme oxygenase family. As to expression, widely expressed.

Its subcellular location is the plastid. It is found in the chloroplast. The catalysed reaction is heme b + 3 reduced [NADPH--hemoprotein reductase] + 3 O2 = biliverdin IXalpha + CO + Fe(2+) + 3 oxidized [NADPH--hemoprotein reductase] + 3 H2O + H(+). Activated by ascorbate. Key enzyme in the synthesis of the chromophore of the phytochrome family of plant photoreceptors. Catalyzes the opening of the heme ring to form the open-chain tetrapyrrole biliverdin IX with the release of iron and carbon monoxide (CO). Produces specifically the biliverdin IX-alpha isomer. Can form complex with heme, is ferredoxin-dependent and its activity is increased in the presence of ascorbate. Plays a role in salt acclimation signaling. May affect the plastid-to-nucleus signaling pathway by perturbing tetrapyrrole synthesis. The plastid-to-nucleus signal plays an important role in the coordinated expression of both nuclear- and chloroplast-localized genes that encode photosynthesis-related proteins. The chain is Heme oxygenase 1, chloroplastic (HO1) from Arabidopsis thaliana (Mouse-ear cress).